Consider the following 147-residue polypeptide: MKNQMNLQFSALSQNESFARVTVASFITQLDPTMDELTEIKTVVSEAVTNAIIHGYESNSDGVVYISVTLHEDGVVELMIRDEGIGIDNVDEAKQPLYTTKPDLERSGMGFTIMENFMDEIRVESTVLEGTTLYLKKHLTNSKALCN.

The protein belongs to the anti-sigma-factor family.

It catalyses the reaction L-seryl-[protein] + ATP = O-phospho-L-seryl-[protein] + ADP + H(+). It carries out the reaction L-threonyl-[protein] + ATP = O-phospho-L-threonyl-[protein] + ADP + H(+). In terms of biological role, binds to sigma F and blocks its ability to form an RNA polymerase holoenzyme (E-sigma F). Phosphorylates SpoIIAA on a serine residue. This phosphorylation may enable SpoIIAA to act as an anti-anti-sigma factor that counteracts SpoIIAB and thus releases sigma F from inhibition. This chain is Anti-sigma F factor, found in Priestia megaterium (Bacillus megaterium).